The chain runs to 1074 residues: Collagen, type I, alpha 1a (1074 aa).

Residues lysine 1–proline 13 show a composition bias toward pro residues. A disordered region spans residues lysine 1–arginine 1010. Low complexity predominate over residues methionine 14 to arginine 36. Residues asparagine 45–glutamate 59 are compositionally biased toward basic and acidic residues. A compositionally biased stretch (low complexity) spans threonine 129–alanine 147. The segment covering proline 149–proline 162 has biased composition (pro residues). Residues glycine 163–glycine 181 show a composition bias toward gly residues. 3 stretches are compositionally biased toward low complexity: residues proline 182–proline 225, serine 234–valine 272, and glutamate 290–alanine 299. Residues glycine 301–glycine 313 are compositionally biased toward gly residues. 3 stretches are compositionally biased toward low complexity: residues valine 377–lysine 392, valine 469–proline 530, and arginine 563–threonine 578. A compositionally biased stretch (gly residues) spans glycine 588–glycine 597. 2 stretches are compositionally biased toward low complexity: residues alanine 611–threonine 647 and proline 661–valine 683. Positions proline 685 to proline 697 are enriched in pro residues. Composition is skewed to low complexity over residues proline 715–alanine 742 and proline 803–serine 823. Pro residues predominate over residues alanine 847–valine 857. Low complexity predominate over residues proline 871–proline 890. Residues arginine 893–histidine 907 show a composition bias toward basic and acidic residues. The segment covering serine 920–proline 956 has biased composition (low complexity). Positions alanine 974 to proline 986 are enriched in pro residues. A Fibrillar collagen NC1 domain is found at leucine 1014–leucine 1074.

The protein belongs to the fibrillar collagen family.

The protein localises to the secreted. It is found in the extracellular space. Its subcellular location is the extracellular matrix. In Epinephelus marginatus (Dusky grouper), this protein is Collagen, type I, alpha 1a.